Reading from the N-terminus, the 211-residue chain is Regulator of G-protein signaling 2 (211 aa).

Residues 32-66 (KMKRTLLKDWKTRLSYFLQNSSTPGKPKTGKKSKQ) form a necessary for membrane association region. The tract at residues 79-116 (LWAEAFDELLASKYGLAAFRAFLKSEFCEENIEFWLAC) is necessary to inhibit protein synthesis. Residues 83 to 199 (AFDELLASKY…LESEFYQDLC (117 aa)) enclose the RGS domain.

As to quaternary structure, interacts with GNAQ. Does not interact with GNAI1 and GNAI3. Interacts with EIF2B5. Interacts with PRKG1 (isoform alpha). Post-translationally, phosphorylated by protein kinase C. Phosphorylation by PRKG1 leads to activation of RGS2 activity.

The protein resides in the cell membrane. Its subcellular location is the cytoplasm. It localises to the nucleus. It is found in the nucleolus. In terms of biological role, regulates G protein-coupled receptor signaling cascades. Inhibits signal transduction by increasing the GTPase activity of G protein alpha subunits, thereby driving them into their inactive GDP-bound form. It is involved in the negative regulation of the angiotensin-activated signaling pathway. Plays a role in the regulation of blood pressure in response to signaling via G protein-coupled receptors and GNAQ. Plays a role in regulating the constriction and relaxation of vascular smooth muscle. Binds EIF2B5 and blocks its activity, thereby inhibiting the translation of mRNA into protein. This is Regulator of G-protein signaling 2 (Rgs2) from Rattus norvegicus (Rat).